The following is a 503-amino-acid chain: Probable cytosol aminopeptidase (503 aa).

The Mn(2+) site is built by Lys268 and Asp273. The active site involves Lys280. 3 residues coordinate Mn(2+): Asp291, Asp350, and Glu352. Residue Arg354 is part of the active site.

The protein belongs to the peptidase M17 family. Requires Mn(2+) as cofactor.

It is found in the cytoplasm. The catalysed reaction is Release of an N-terminal amino acid, Xaa-|-Yaa-, in which Xaa is preferably Leu, but may be other amino acids including Pro although not Arg or Lys, and Yaa may be Pro. Amino acid amides and methyl esters are also readily hydrolyzed, but rates on arylamides are exceedingly low.. It carries out the reaction Release of an N-terminal amino acid, preferentially leucine, but not glutamic or aspartic acids.. Its function is as follows. Presumably involved in the processing and regular turnover of intracellular proteins. Catalyzes the removal of unsubstituted N-terminal amino acids from various peptides. The protein is Probable cytosol aminopeptidase of Nocardia farcinica (strain IFM 10152).